A 200-amino-acid polypeptide reads, in one-letter code: Pyridoxal 5'-phosphate synthase subunit PdxT (200 aa).

46-48 (GES) contacts L-glutamine. C78 (nucleophile) is an active-site residue. L-glutamine is bound by residues R107 and 138–139 (IR). Residues H175 and E177 each act as charge relay system in the active site.

The protein belongs to the glutaminase PdxT/SNO family. In the presence of PdxS, forms a dodecamer of heterodimers. Only shows activity in the heterodimer.

It carries out the reaction aldehydo-D-ribose 5-phosphate + D-glyceraldehyde 3-phosphate + L-glutamine = pyridoxal 5'-phosphate + L-glutamate + phosphate + 3 H2O + H(+). The catalysed reaction is L-glutamine + H2O = L-glutamate + NH4(+). Its pathway is cofactor biosynthesis; pyridoxal 5'-phosphate biosynthesis. Its function is as follows. Catalyzes the hydrolysis of glutamine to glutamate and ammonia as part of the biosynthesis of pyridoxal 5'-phosphate. The resulting ammonia molecule is channeled to the active site of PdxS. In Corynebacterium glutamicum (strain ATCC 13032 / DSM 20300 / JCM 1318 / BCRC 11384 / CCUG 27702 / LMG 3730 / NBRC 12168 / NCIMB 10025 / NRRL B-2784 / 534), this protein is Pyridoxal 5'-phosphate synthase subunit PdxT.